Here is a 186-residue protein sequence, read N- to C-terminus: MCVYIVAGLGNPGPSYDKTRHNVGQMVLDILSGGARFRRHKTNNFYLSLGDILLVKPDAYMNLSGPVIASLMKFHSVSDLLVLHDDIDLPLGTLRFKQGGGTAGHRGLRSISDCLGSDYARLRVGIGRPENNQSIEDFVLSNFSPVQTDIISRTIQLAAEAVLHLRDNGFVGVKQFIAQTKSPSRT.

Tyr16 contacts tRNA. Catalysis depends on His21, which acts as the Proton acceptor. TRNA-binding residues include Tyr60 and Asn62.

This sequence belongs to the PTH family. In terms of assembly, monomer.

The protein resides in the cytoplasm. The catalysed reaction is an N-acyl-L-alpha-aminoacyl-tRNA + H2O = an N-acyl-L-amino acid + a tRNA + H(+). Functionally, hydrolyzes ribosome-free peptidyl-tRNAs (with 1 or more amino acids incorporated), which drop off the ribosome during protein synthesis, or as a result of ribosome stalling. Its function is as follows. Catalyzes the release of premature peptidyl moieties from peptidyl-tRNA molecules trapped in stalled 50S ribosomal subunits, and thus maintains levels of free tRNAs and 50S ribosomes. The polypeptide is Peptidyl-tRNA hydrolase (Tropheryma whipplei (strain TW08/27) (Whipple's bacillus)).